A 654-amino-acid chain; its full sequence is Beta-galactosidase-1-like protein (654 aa).

A signal peptide spans 1-27 (MAPKKPSCLRSLLLPLSLTLLLPQADT). Asn-97 carries an N-linked (GlcNAc...) asparagine glycan. Glu-186 functions as the Proton donor in the catalytic mechanism. Asn-243 carries an N-linked (GlcNAc...) asparagine glycan. Catalysis depends on Glu-264, which acts as the Nucleophile.

It belongs to the glycosyl hydrolase 35 family.

It localises to the secreted. Its function is as follows. Probable glycosyl hydrolase. This chain is Beta-galactosidase-1-like protein (GLB1L), found in Macaca fascicularis (Crab-eating macaque).